The following is a 217-amino-acid chain: Probable glutathione S-transferase (217 aa).

The GST N-terminal domain occupies 2–81 (AEVKLLGLRY…YIDEAFEGPS (80 aa)). Glutathione is bound by residues Ser12, Lys39, Ile53, and 65–66 (ES). Residues 86–210 (DPYDRALARF…ELLIRYRAYI (125 aa)) enclose the GST C-terminal domain.

It belongs to the GST superfamily. HSP26 family.

The catalysed reaction is RX + glutathione = an S-substituted glutathione + a halide anion + H(+). The protein is Probable glutathione S-transferase (PRP1) of Solanum tuberosum (Potato).